Here is a 123-residue protein sequence, read N- to C-terminus: Protein Wnt-3 (123 aa).

The O-palmitoleoyl serine; by PORCN moiety is linked to residue S1. C89 and C104 form a disulfide bridge. N-linked (GlcNAc...) asparagine glycosylation is present at N90.

This sequence belongs to the Wnt family. Post-translationally, palmitoleoylation is required for efficient binding to frizzled receptors. Depalmitoleoylation leads to Wnt signaling pathway inhibition.

The protein localises to the secreted. Its subcellular location is the extracellular space. It localises to the extracellular matrix. In terms of biological role, ligand for members of the frizzled family of seven transmembrane receptors. Functions in the canonical Wnt signaling pathway that results in activation of transcription factors of the TCF/LEF family. Required for normal embryonic development. The sequence is that of Protein Wnt-3 (WNT-3) from Eptatretus stoutii (Pacific hagfish).